The following is a 70-amino-acid chain: Small ribosomal subunit protein bS21 (70 aa).

It belongs to the bacterial ribosomal protein bS21 family.

This is Small ribosomal subunit protein bS21 from Herminiimonas arsenicoxydans.